The sequence spans 157 residues: Glycine/sarcosine/betaine reductase complex component A (157 aa).

Selenocysteine 44 is an active-site residue. Selenocysteine 44 is a non-standard amino acid (selenocysteine).

The protein belongs to the GrdA family. Monomer. Component of the glycine, sarcosine and betaine reductase complexes, together with components B and C.

The catalysed reaction is acetyl phosphate + [thioredoxin]-disulfide + NH4(+) + H2O = [thioredoxin]-dithiol + glycine + phosphate + H(+). The enzyme catalyses acetyl phosphate + methylamine + [thioredoxin]-disulfide + H2O = sarcosine + [thioredoxin]-dithiol + phosphate + H(+). It catalyses the reaction acetyl phosphate + trimethylamine + [thioredoxin]-disulfide + H2O = glycine betaine + [thioredoxin]-dithiol + phosphate + H(+). In terms of biological role, in the first step of glycine, betaine and sarcosine reductases, the substrate is bound to component PB via a Schiff base intermediate. Then the PB-activated substrate is nucleophilically attacked by the selenol anion of component PA to transform it to a carboxymethylated selenoether and the respective amine. By action of component PC, acetyl phosphate is formed, leaving component PA in its oxidized state. Finally component PA becomes reduced by the thioredoxin system to start a new catalytic cycle of reductive deamination. In Treponema denticola (strain ATCC 35405 / DSM 14222 / CIP 103919 / JCM 8153 / KCTC 15104), this protein is Glycine/sarcosine/betaine reductase complex component A (grdA).